A 995-amino-acid chain; its full sequence is DExH-box ATP-dependent RNA helicase DExH1 (995 aa).

2 disordered regions span residues 1-42 (MPPH…EQRW) and 156-192 (KTTQ…ASKL). The span at 25-37 (RGGGGRGGGGGGR) shows a compositional bias: gly residues. A compositionally biased stretch (low complexity) spans 161-170 (SGSSGASASA). The segment covering 171–181 (FNDQQDRTSTL) has biased composition (polar residues). The Helicase ATP-binding domain maps to 238-405 (LNSVSQNQVL…FGNSPTMHIP (168 aa)). An ATP-binding site is contributed by 251–258 (GETGCGKT). The short motif at 352-355 (DEIH) is the DEIH box element. Positions 429-450 (SSDSGNYQGSSRGRRRESESKK) are disordered. In terms of domain architecture, Helicase C-terminal spans 484–663 (QIDVDLVEAT…ELCLHIKSLQ (180 aa)).

Belongs to the DExH box helicase family.

It carries out the reaction ATP + H2O = ADP + phosphate + H(+). The protein is DExH-box ATP-dependent RNA helicase DExH1 of Arabidopsis thaliana (Mouse-ear cress).